We begin with the raw amino-acid sequence, 356 residues long: ADP-ribosylhydrolase ARH3 (356 aa).

Residues aspartate 26, glutamate 33, threonine 62, aspartate 63, and aspartate 64 each coordinate Mg(2+). Aspartate 63 is a substrate binding site. Substrate-binding positions include 132–138 (KGSYGNG), histidine 168, and isoleucine 260. Mg(2+)-binding residues include aspartate 303, aspartate 305, and threonine 306.

The protein belongs to the ADP-ribosylglycohydrolase family. Monomer. Mg(2+) serves as cofactor. Mn(2+) is required as a cofactor.

The protein localises to the nucleus. Its subcellular location is the cytoplasm. The protein resides in the chromosome. It localises to the mitochondrion matrix. It catalyses the reaction [(1''-&gt;2')-ADP-alpha-D-ribose](n) + H2O = [(1''-&gt;2')-ADP-alpha-D-ribose](n-1) + ADP-D-ribose. The catalysed reaction is 1''-O-acetyl-ADP-alpha-D-ribose + H2O = ADP-D-ribose + acetate + H(+). The enzyme catalyses O-(ADP-D-ribosyl)-L-seryl-[protein] + H2O = ADP-D-ribose + L-seryl-[protein]. It carries out the reaction alpha-NAD(+) + H2O = ADP-D-ribose + nicotinamide + H(+). The protein undergoes a dramatic conformational switch from closed to open states upon substrate-binding, which enables specific substrate recognition for the 1''-O-linkage. The glutamate flap (Glu-33) blocks substrate entrance to Mg(2+) in the unliganded closed state. In presence of substrate, Glu-33 is ejected from the active site: this closed-to-open transition significantly widens the substrate-binding channel and precisely positions the scissile 1''-O-linkage for cleavage while securing tightly 2'- and 3'-hydroxyls of ADP-ribose. Activity is inhibited by calcium. In terms of biological role, ADP-ribosylhydrolase that preferentially hydrolyzes the scissile alpha-O-linkage attached to the anomeric C1'' position of ADP-ribose and acts on different substrates, such as proteins ADP-ribosylated on serine and threonine, free poly(ADP-ribose) and O-acetyl-ADP-D-ribose. Specifically acts as a serine mono-ADP-ribosylhydrolase by mediating the removal of mono-ADP-ribose attached to serine residues on proteins, thereby playing a key role in DNA damage response. Serine ADP-ribosylation of proteins constitutes the primary form of ADP-ribosylation of proteins in response to DNA damage. Does not hydrolyze ADP-ribosyl-arginine, -cysteine, -diphthamide, or -asparagine bonds. Also able to degrade protein free poly(ADP-ribose), which is synthesized in response to DNA damage: free poly(ADP-ribose) acts as a potent cell death signal and its degradation by ADPRHL2 protects cells from poly(ADP-ribose)-dependent cell death, a process named parthanatos. Also hydrolyzes free poly(ADP-ribose) in mitochondria. Specifically digests O-acetyl-ADP-D-ribose, a product of deacetylation reactions catalyzed by sirtuins. Specifically degrades 1''-O-acetyl-ADP-D-ribose isomer, rather than 2''-O-acetyl-ADP-D-ribose or 3''-O-acetyl-ADP-D-ribose isomers. The sequence is that of ADP-ribosylhydrolase ARH3 (adprs) from Latimeria chalumnae (Coelacanth).